A 524-amino-acid polypeptide reads, in one-letter code: Thioredoxin reductase 2, mitochondrial (524 aa).

The N-terminal 34 residues, Met1–Ala34, are a transit peptide targeting the mitochondrion. Asp41–Tyr70 lines the FAD pocket. Lys79 is subject to N6-succinyllysine. An intrachain disulfide couples Cys86 to Cys91. N6-succinyllysine occurs at positions 175 and 329. The active-site Proton acceptor is His497. A cross-link (cysteinyl-selenocysteine (Cys-Sec)) is located at residues Cys522–Sec523. Position 523 (Sec523) is a non-standard amino acid, selenocysteine.

This sequence belongs to the class-I pyridine nucleotide-disulfide oxidoreductase family. Homodimer. FAD serves as cofactor. In terms of tissue distribution, expressed in liver, heart, testis and kidney.

Its subcellular location is the mitochondrion. The catalysed reaction is [thioredoxin]-dithiol + NADP(+) = [thioredoxin]-disulfide + NADPH + H(+). Its function is as follows. Involved in the control of reactive oxygen species levels and the regulation of mitochondrial redox homeostasis. Maintains thioredoxin in a reduced state. May play a role in redox-regulated cell signaling. The protein is Thioredoxin reductase 2, mitochondrial of Mus musculus (Mouse).